Here is a 138-residue protein sequence, read N- to C-terminus: Ribosome-binding factor A (138 aa).

It belongs to the RbfA family. As to quaternary structure, monomer. Binds 30S ribosomal subunits, but not 50S ribosomal subunits or 70S ribosomes.

It is found in the cytoplasm. One of several proteins that assist in the late maturation steps of the functional core of the 30S ribosomal subunit. Associates with free 30S ribosomal subunits (but not with 30S subunits that are part of 70S ribosomes or polysomes). Required for efficient processing of 16S rRNA. May interact with the 5'-terminal helix region of 16S rRNA. The chain is Ribosome-binding factor A from Paracoccus denitrificans (strain Pd 1222).